Reading from the N-terminus, the 122-residue chain is Large ribosomal subunit protein uL14 (122 aa).

It belongs to the universal ribosomal protein uL14 family. Part of the 50S ribosomal subunit. Forms a cluster with proteins L3 and L19. In the 70S ribosome, L14 and L19 interact and together make contacts with the 16S rRNA in bridges B5 and B8.

Its function is as follows. Binds to 23S rRNA. Forms part of two intersubunit bridges in the 70S ribosome. The sequence is that of Large ribosomal subunit protein uL14 from Xanthomonas axonopodis pv. citri (strain 306).